The chain runs to 354 residues: Methylthioribose-1-phosphate isomerase (354 aa).

Residues 49–51 (RGA), Arg-92, and Gln-199 each bind substrate. The active-site Proton donor is the Asp-240. A substrate-binding site is contributed by 250–251 (NK).

Belongs to the eIF-2B alpha/beta/delta subunits family. MtnA subfamily.

It carries out the reaction 5-(methylsulfanyl)-alpha-D-ribose 1-phosphate = 5-(methylsulfanyl)-D-ribulose 1-phosphate. The protein operates within amino-acid biosynthesis; L-methionine biosynthesis via salvage pathway; L-methionine from S-methyl-5-thio-alpha-D-ribose 1-phosphate: step 1/6. Its function is as follows. Catalyzes the interconversion of methylthioribose-1-phosphate (MTR-1-P) into methylthioribulose-1-phosphate (MTRu-1-P). This Koribacter versatilis (strain Ellin345) protein is Methylthioribose-1-phosphate isomerase.